The sequence spans 204 residues: Thymidylate kinase (204 aa).

Glycine 11–serine 18 contributes to the ATP binding site.

It belongs to the thymidylate kinase family.

The enzyme catalyses dTMP + ATP = dTDP + ADP. Its function is as follows. Phosphorylation of dTMP to form dTDP in both de novo and salvage pathways of dTTP synthesis. The sequence is that of Thymidylate kinase from Janthinobacterium sp. (strain Marseille) (Minibacterium massiliensis).